Here is a 1151-residue protein sequence, read N- to C-terminus: Semaphorin-5B (1151 aa).

The Extracellular portion of the chain corresponds to 1–1036 (MPCGFSPSPV…TDCAGFNLIH (1036 aa)). Positions 103 to 553 (HPTVAFEDLQ…LRDGVLRVPL (451 aa)) constitute a Sema domain. Asn-153 carries N-linked (GlcNAc...) asparagine glycosylation. 2 disulfide bridges follow: Cys-172–Cys-182 and Cys-199–Cys-208. 2 N-linked (GlcNAc...) asparagine glycosylation sites follow: Asn-236 and Asn-345. Disulfide bonds link Cys-322/Cys-425 and Cys-346/Cys-388. Asn-436 is a glycosylation site (N-linked (GlcNAc...) asparagine). The 48-residue stretch at 555–602 (RCAAYRSQGACLGARDPYCGWDGKQQRCSTLEDSSNMSLWTQNITACP) folds into the PSI domain. TSP type-1 domains are found at residues 664-720 (NGAW…TPCP) and 722-771 (PIFW…EGCP). 6 disulfides stabilise this stretch: Cys-676-Cys-713, Cys-680-Cys-719, Cys-691-Cys-703, Cys-734-Cys-765, Cys-738-Cys-770, and Cys-749-Cys-755. Thr-788 carries O-linked (GalNAc...) threonine glycosylation. TSP type-1 domains lie at 853–908 (SGGW…QACP), 910–965 (RGAW…QACP), and 966–1010 (EGWS…RPCP). 6 disulfide bridges follow: Cys-865/Cys-902, Cys-869/Cys-907, Cys-880/Cys-892, Cys-922/Cys-959, Cys-926/Cys-964, and Cys-937/Cys-949. The chain crosses the membrane as a helical; Signal-anchor for type III membrane protein span at residues 1037–1057 (LVATGISCFLGSGLLTLAVYL). Residues 1058–1151 (SCQHCQRQSQ…SPGQRCFPNS (94 aa)) lie on the Cytoplasmic side of the membrane.

The protein belongs to the semaphorin family.

The protein resides in the membrane. In terms of biological role, may act as a positive axonal guidance cue. The protein is Semaphorin-5B (SEMA5B) of Homo sapiens (Human).